A 386-amino-acid chain; its full sequence is Cytochrome b (386 aa).

The next 4 helical transmembrane spans lie at 32–52 (LGSL…FLAM), 76–98 (WFIR…IHIG), 113–133 (VWNV…LGYC), and 179–199 (FFAF…MHFM). Positions 82 and 96 each coordinate heme b. 2 residues coordinate heme b: histidine 183 and histidine 197. Histidine 202 contributes to the a ubiquinone binding site. 4 consecutive transmembrane segments (helical) span residues 225 to 245 (FIFK…LFVF), 289 to 309 (LLGV…PITD), 321 to 341 (FSKF…HLGE), and 348 to 368 (FVVM…VIVP).

The protein belongs to the cytochrome b family. In terms of assembly, fungal cytochrome b-c1 complex contains 10 subunits; 3 respiratory subunits, 2 core proteins and 5 low-molecular weight proteins. Cytochrome b-c1 complex is a homodimer. Heme b is required as a cofactor.

Its subcellular location is the mitochondrion inner membrane. Component of the ubiquinol-cytochrome c reductase complex (complex III or cytochrome b-c1 complex) that is part of the mitochondrial respiratory chain. The b-c1 complex mediates electron transfer from ubiquinol to cytochrome c. Contributes to the generation of a proton gradient across the mitochondrial membrane that is then used for ATP synthesis. This Kluyveromyces lactis (strain ATCC 8585 / CBS 2359 / DSM 70799 / NBRC 1267 / NRRL Y-1140 / WM37) (Yeast) protein is Cytochrome b (COB).